The sequence spans 175 residues: Inorganic pyrophosphatase (175 aa).

The substrate site is built by lysine 30, arginine 44, and tyrosine 56. Residues aspartate 66, aspartate 71, and aspartate 103 each coordinate Mg(2+). Residue tyrosine 142 coordinates substrate.

This sequence belongs to the PPase family. Homohexamer. Mg(2+) is required as a cofactor.

The protein resides in the cytoplasm. It catalyses the reaction diphosphate + H2O = 2 phosphate + H(+). Its function is as follows. Catalyzes the hydrolysis of inorganic pyrophosphate (PPi) forming two phosphate ions. This chain is Inorganic pyrophosphatase, found in Pseudomonas aeruginosa (strain ATCC 15692 / DSM 22644 / CIP 104116 / JCM 14847 / LMG 12228 / 1C / PRS 101 / PAO1).